The chain runs to 1876 residues: Vitellogenin-2 (1876 aa).

The signal sequence occupies residues methionine 1–alanine 16. Residues tryptophan 21–valine 838 form the Vitellogenin domain. Residues asparagine 211 and asparagine 290 are each glycosylated (N-linked (GlcNAc...) asparagine). Positions threonine 322 to leucine 424 are disordered. Composition is skewed to low complexity over residues serine 330–arginine 368 and serine 387–serine 404. A glycan (N-linked (GlcNAc...) asparagine) is linked at asparagine 409. The span at serine 411–serine 420 shows a compositional bias: low complexity. N-linked (GlcNAc...) asparagine glycans are attached at residues asparagine 595, asparagine 631, asparagine 932, asparagine 1012, and asparagine 1055. Residues serine 1192–serine 1239 are disordered. A compositionally biased stretch (basic residues) spans histidine 1209–serine 1225. Residues asparagine 1318, asparagine 1398, asparagine 1417, asparagine 1424, asparagine 1469, asparagine 1532, asparagine 1636, asparagine 1719, asparagine 1760, and asparagine 1770 are each glycosylated (N-linked (GlcNAc...) asparagine). One can recognise a VWFD domain in the interval proline 1518 to arginine 1703. Cysteine 1520 and cysteine 1664 are disulfide-bonded. Residues serine 1729–serine 1788 form a disordered region. Over residues serine 1741–serine 1772 the composition is skewed to low complexity.

It is found in the secreted. Precursor of the egg-yolk proteins that are sources of nutrients during embryonic development. The sequence is that of Vitellogenin-2 (VG2) from Periplaneta americana (American cockroach).